Consider the following 220-residue polypeptide: CRISPR system Cms endoribonuclease Csm3 (220 aa).

This sequence belongs to the CRISPR-associated Csm3 family. As to quaternary structure, part of the Csm effector complex that includes at least Cas10(1), Csm2(3), Csm3(5), Csm4(1), Csm5(1) and mature crRNA. The Csm complex is elongated and slightly twisted with a maximal length of 215 Angstroms and a diameter of 75-80 Angstroms. It has been modeled to have a central protein filamant of Csm3 subunits along which the dsRNA helix of paired crRNA and target RNA binds. The filament is capped at one end by Cas10 and Csm4 and at the other end by Csm5; ssDNA is thought to bind to the N-terminal HD domain of Cas10. Csm with a precursor crRNA does not include Csm5, while Cas6, the enzyme probably involved in pre-crRNA processing, is found associated with a subset of the Csm complex. Requires a metal cation as cofactor.

Its activity is regulated as follows. Target ssRNase is inhibited by EDTA. In terms of biological role, CRISPR (clustered regularly interspaced short palindromic repeat) is an adaptive immune system that provides protection against mobile genetic elements (viruses, transposable elements and conjugative plasmids). CRISPR clusters contain spacers, sequences complementary to antecedent mobile elements, and target invading nucleic acids. CRISPR clusters are transcribed and processed into CRISPR RNA (crRNA). The type III-A Csm effector complex binds crRNA and acts as a crRNA-guided RNase, DNase and cyclic oligoadenylate synthase; binding of target RNA cognate to the crRNA is required for all activities. In a heterologous host this Csm effector complex restricts ssRNA phage MS2, suggesting it may target RNA viruses in vivo. Functionally, csm functions as a non-specific ssDNase. Base-pairing between crRNA and target RNA to form a ternary Csm complex activates a ssDNase activity; target RNA cleavage suppresses the ssDNase, a temporal control that prevents uncontrolled DNA degradation. Viral RNA transcripts probably tether the Csm complex to the viral genome, recruiting Cas10 ssDNA activity which is able to degrade DNA in the transcription bubble, spatially controlling the DNase activity. Its function is as follows. This subunit has the target ssRNA endonuclease activity; it cleaves multiple sites in the target RNA at 6 nucleotide intervals. The number of cleavage sites in the target RNA correlates with the number of Csm3 subunits in the Csm effector complex. In the Csm complex target RNA and ssDNA are cleaved simultaneously, although RNase activity (of Csm3) is much faster. RNA cleavage by Csm3 is not required for ssDNase activity as Csm complex with inactive Csm3 still has ssDNase activity; however as the cleaved target RNA products dissociate away ssDNase activity decreases. The protein is CRISPR system Cms endoribonuclease Csm3 of Streptococcus thermophilus.